Consider the following 421-residue polypeptide: Elongation factor 1-alpha (421 aa).

The tr-type G domain occupies 4–220; it reads NRHQNLAVIG…NGLPVPQPPT (217 aa). The segment at 13–20 is G1; sequence GHVDHGKS. Residue 13–20 coordinates GTP; sequence GHVDHGKS. Ser-20 is a Mg(2+) binding site. Positions 69–73 are G2; it reads GVTID. The interval 90–93 is G3; the sequence is DCPG. GTP is bound by residues 90-94 and 145-148; these read DCPGH and NKMD. The G4 stretch occupies residues 145–148; sequence NKMD. A G5 region spans residues 184–186; the sequence is SAF.

The protein belongs to the TRAFAC class translation factor GTPase superfamily. Classic translation factor GTPase family. EF-Tu/EF-1A subfamily.

It localises to the cytoplasm. The enzyme catalyses GTP + H2O = GDP + phosphate + H(+). Its function is as follows. GTP hydrolase that promotes the GTP-dependent binding of aminoacyl-tRNA to the A-site of ribosomes during protein biosynthesis. In Halobacterium salinarum (strain ATCC 700922 / JCM 11081 / NRC-1) (Halobacterium halobium), this protein is Elongation factor 1-alpha.